Consider the following 392-residue polypeptide: ATP-dependent RNA helicase eIF4A (392 aa).

The Q motif motif lies at Asp-19 to Gln-47. The 171-residue stretch at Ile-50–Ile-220 folds into the Helicase ATP-binding domain. Ala-63–Thr-70 contacts ATP. The residue at position 65 (Ser-65) is a Phosphoserine. Positions Asp-168–Asp-171 match the DEAD box motif. Residues Gly-231–Ile-392 form the Helicase C-terminal domain.

The protein belongs to the DEAD box helicase family. eIF4A subfamily. Component of the eIF4F complex, which composition varies with external and internal environmental conditions. It is composed of at least eIF4A, eIF4E and eIF4G.

It is found in the cytoplasm. It carries out the reaction ATP + H2O = ADP + phosphate + H(+). Functionally, ATP-dependent RNA helicase which is a subunit of the eIF4F complex involved in cap recognition and is required for mRNA binding to ribosome. In the current model of translation initiation, eIF4A unwinds RNA secondary structures in the 5'-UTR of mRNAs which is necessary to allow efficient binding of the small ribosomal subunit, and subsequent scanning for the initiator codon. The protein is ATP-dependent RNA helicase eIF4A (tif1) of Schizosaccharomyces pombe (strain 972 / ATCC 24843) (Fission yeast).